We begin with the raw amino-acid sequence, 1479 residues long: C-type mannose receptor 2 (1479 aa).

The N-terminal stretch at 1–30 is a signal peptide; sequence MGPGRPAPAPWPRHLLRCVLLLGCLHLGRP. At 31–1414 the chain is on the extracellular side; sequence GAPGDAALPE…PSALPENPAA (1384 aa). The Ricin B-type lectin domain occupies 41–167; it reads PNVFLIFSHG…WRIYGSEEDL (127 aa). A disulfide bridge links Cys-54 with Cys-68. Asn-69 carries N-linked (GlcNAc...) (complex) asparagine glycosylation. Cysteines 93 and 112 form a disulfide. The N-linked (GlcNAc...) asparagine glycan is linked to Asn-140. Residues 182 to 230 enclose the Fibronectin type-II domain; sequence SHGKPCTIPFKYDNQWFHGCTSTGREDGHLWCATTQDYGKDERWGFCPI. Cystine bridges form between Cys-187–Cys-213, Cys-201–Cys-228, Cys-266–Cys-359, and Cys-335–Cys-351. A C-type lectin 1 domain is found at 244–360; the sequence is LTDSCYQFNF…CSIALPYVCK (117 aa). N-linked (GlcNAc...) asparagine glycosylation is present at Asn-364. C-type lectin domains lie at 389-505, 528-644, 678-809, and 832-951; these read FQGH…SICK, HSPS…RYIC, KLRY…WICK, and FQEA…YICK. 2 disulfide bridges follow: Cys-410–Cys-504 and Cys-481–Cys-496. N-linked (GlcNAc...) asparagine glycosylation occurs at Asn-588. Cystine bridges form between Cys-618-Cys-635, Cys-704-Cys-808, Cys-785-Cys-800, Cys-853-Cys-950, and Cys-927-Cys-942. Asn-954 and Asn-1029 each carry an N-linked (GlcNAc...) asparagine glycan. C-type lectin domains lie at 979–1107, 1132–1243, and 1273–1393; these read FLNK…GFIC, YLNG…GAVC, and FREH…GVVC. The cysteines at positions 1078 and 1098 are disulfide-linked. A Glycyl lysine isopeptide (Lys-Gly) (interchain with G-Cter in SUMO1) cross-link involves residue Lys-1142. Cysteines 1220 and 1234 form a disulfide. Asn-1350 is a glycosylation site (N-linked (GlcNAc...) asparagine). Cys-1369 and Cys-1384 are joined by a disulfide. Residues 1415 to 1435 form a helical membrane-spanning segment; that stretch reads LVVVLMAVLLLLALLTAALIL. The Cytoplasmic segment spans residues 1436-1479; that stretch reads YRRRQSIERGAFEGARYSRSSSSPTEATEKNILVSDMEMNEQQE. The tract at residues 1450 to 1479 is disordered; sequence ARYSRSSSSPTEATEKNILVSDMEMNEQQE.

Interacts with C-terminal region of type I collagen/COL1A1. Interacts directly with PLAUR/UPAR and PLAU/pro-UPA to form a tri-molecular complex. Interacts with collagen V. Post-translationally, N-glycosylated. As to expression, ubiquitous with low expression in brain, placenta, lung, kidney, pancreas, spleen, thymus and colon. Expressed in endothelial cells, fibroblasts and macrophages. Highly expressed in fetal lung and kidney.

It is found in the membrane. In terms of biological role, may play a role as endocytotic lectin receptor displaying calcium-dependent lectin activity. Internalizes glycosylated ligands from the extracellular space for release in an endosomal compartment via clathrin-mediated endocytosis. May be involved in plasminogen activation system controlling the extracellular level of PLAUR/PLAU, and thus may regulate protease activity at the cell surface. May contribute to cellular uptake, remodeling and degradation of extracellular collagen matrices. May play a role during cancer progression as well as in other chronic tissue destructive diseases acting on collagen turnover. May participate in remodeling of extracellular matrix cooperating with the matrix metalloproteinases (MMPs). This chain is C-type mannose receptor 2 (MRC2), found in Homo sapiens (Human).